The chain runs to 464 residues: ATP-dependent protease ATPase subunit HslU (464 aa).

ATP-binding positions include Ile19, 61-66 (GVGKTE), Asp277, Glu342, and Arg414.

This sequence belongs to the ClpX chaperone family. HslU subfamily. In terms of assembly, a double ring-shaped homohexamer of HslV is capped on each side by a ring-shaped HslU homohexamer. The assembly of the HslU/HslV complex is dependent on binding of ATP.

The protein localises to the cytoplasm. Its function is as follows. ATPase subunit of a proteasome-like degradation complex; this subunit has chaperone activity. The binding of ATP and its subsequent hydrolysis by HslU are essential for unfolding of protein substrates subsequently hydrolyzed by HslV. HslU recognizes the N-terminal part of its protein substrates and unfolds these before they are guided to HslV for hydrolysis. This is ATP-dependent protease ATPase subunit HslU from Lactobacillus johnsonii (strain CNCM I-12250 / La1 / NCC 533).